A 151-amino-acid polypeptide reads, in one-letter code: Glycosylation-dependent cell adhesion molecule 1 (151 aa).

An N-terminal signal peptide occupies residues 1 to 19 (MKFFTVLLFVSLAATSLAL). The tract at residues 29 to 123 (MKTQPTDAIP…ENLTKSSQTV (95 aa)) is disordered. Residues 42 to 52 (STPTSYTSEES) are compositionally biased toward low complexity. Residues 53-71 (TSSKDLSKEPSIFREELIS) are compositionally biased toward basic and acidic residues. S54, S59, S63, and S71 each carry phosphoserine. The segment covering 103–114 (RPTTSAATTSEE) has biased composition (low complexity). N-linked (GlcNAc...) asparagine glycosylation occurs at N115.

This sequence belongs to the PP3/GlyCAM-1 family. Post-translationally, extensively O-glycosylated. In terms of tissue distribution, lymph nodes. Associated with the lumenal surface of the high endothelial venules of peripheral lymph nodes.

The protein resides in the cell membrane. Functionally, adhesion molecule that accomplishes cell binding by presenting carbohydrate(s) to the lectin domain of L-selectin. The protein is Glycosylation-dependent cell adhesion molecule 1 (Glycam1) of Mus musculus (Mouse).